The following is a 127-amino-acid chain: Glycine cleavage system H protein (127 aa).

The region spanning 22–104 (KVRIGITDFA…YEKAWMIVVE (83 aa)) is the Lipoyl-binding domain. Residue Lys-63 is modified to N6-lipoyllysine.

This sequence belongs to the GcvH family. As to quaternary structure, the glycine cleavage system is composed of four proteins: P, T, L and H. The cofactor is (R)-lipoate.

In terms of biological role, the glycine cleavage system catalyzes the degradation of glycine. The H protein shuttles the methylamine group of glycine from the P protein to the T protein. Functionally, is also involved in protein lipoylation via its role as an octanoyl/lipoyl carrier protein intermediate. This Bacillus licheniformis (strain ATCC 14580 / DSM 13 / JCM 2505 / CCUG 7422 / NBRC 12200 / NCIMB 9375 / NCTC 10341 / NRRL NRS-1264 / Gibson 46) protein is Glycine cleavage system H protein.